The following is a 33-amino-acid chain: Cytochrome b6-f complex subunit 5 (33 aa).

The helical transmembrane segment at 5 to 25 (LLFGIILGLISCVLAGLFVSA) threads the bilayer.

This sequence belongs to the PetG family. In terms of assembly, the 4 large subunits of the cytochrome b6-f complex are cytochrome b6, subunit IV (17 kDa polypeptide, PetD), cytochrome f and the Rieske protein, while the 4 small subunits are PetG, PetL, PetM and PetN. The complex functions as a dimer.

Its subcellular location is the plastid. It is found in the chloroplast thylakoid membrane. Its function is as follows. Component of the cytochrome b6-f complex, which mediates electron transfer between photosystem II (PSII) and photosystem I (PSI), cyclic electron flow around PSI, and state transitions. PetG is required for either the stability or assembly of the cytochrome b6-f complex. This Bigelowiella natans (Pedinomonas minutissima) protein is Cytochrome b6-f complex subunit 5.